The primary structure comprises 197 residues: MKFTSLICSSILLIIPTVMADDASSDTTIINTITITKTLYTPEESSSLLSVQLESEASVASVASAASEAAASAASIASVASEASAASLASELSALAKVTEVKADVINNYNATINSTLSSSTIAPKISSSSSSSSSKKHESITSVITSSTKDNASAAVTTKTGSATSKAGAAAMAGPVPILTNSIFTAGLLALAAVLL.

Positions 1–20 (MKFTSLICSSILLIIPTVMA) are cleaved as a signal peptide. N-linked (GlcNAc...) asparagine glycosylation is found at Asn110, Asn114, and Asn152. Gly169 carries the GPI-anchor amidated glycine lipid modification. Positions 170-197 (AAAMAGPVPILTNSIFTAGLLALAAVLL) are cleaved as a propeptide — removed in mature form.

The protein localises to the cell membrane. Functionally, predicted GPI-anchored protein which may have a role during host infection. This chain is Predicted GPI-anchored protein 34 (PGA34), found in Candida albicans (strain SC5314 / ATCC MYA-2876) (Yeast).